A 154-amino-acid polypeptide reads, in one-letter code: Large-conductance mechanosensitive channel (154 aa).

The next 3 membrane-spanning stretches (helical) occupy residues 14–34 (VMDLAVGVVIGGAFGKIVTSL), 38–58 (IITPLIGLLLGKVDFSGLFIN), and 81–101 (GLFLNSVIDFVIIAFSIFIVI).

The protein belongs to the MscL family. Homopentamer.

It localises to the cell membrane. Functionally, channel that opens in response to stretch forces in the membrane lipid bilayer. May participate in the regulation of osmotic pressure changes within the cell. This chain is Large-conductance mechanosensitive channel, found in Brevibacillus brevis (strain 47 / JCM 6285 / NBRC 100599).